The sequence spans 142 residues: Hemoglobin subunit alpha-1/2 (142 aa).

In terms of domain architecture, Globin spans 2-142 (VLSPADKTNI…VSTVLTSKYR (141 aa)). Position 4 is a phosphoserine (serine 4). An N6-succinyllysine modification is found at lysine 8. Threonine 9 carries the phosphothreonine modification. Residue lysine 12 is modified to N6-succinyllysine. Lysine 17 is modified (N6-acetyllysine; alternate). Lysine 17 bears the N6-succinyllysine; alternate mark. The residue at position 25 (tyrosine 25) is a Phosphotyrosine. At lysine 41 the chain carries N6-succinyllysine. Histidine 59 lines the O2 pocket. Residue histidine 88 coordinates heme b. At serine 103 the chain carries Phosphoserine. The residue at position 109 (threonine 109) is a Phosphothreonine. Serine 125 carries the post-translational modification Phosphoserine. 2 positions are modified to phosphothreonine: threonine 135 and threonine 138. At serine 139 the chain carries Phosphoserine.

The protein belongs to the globin family. In terms of assembly, heterotetramer of two alpha chains and two beta chains. In terms of tissue distribution, red blood cells.

Its function is as follows. Involved in oxygen transport from the lung to the various peripheral tissues. The chain is Hemoglobin subunit alpha-1/2 from Oryctolagus cuniculus (Rabbit).